The chain runs to 444 residues: Probable D-serine dehydratase (444 aa).

At Lys118 the chain carries N6-(pyridoxal phosphate)lysine.

Belongs to the serine/threonine dehydratase family. DsdA subfamily. Pyridoxal 5'-phosphate is required as a cofactor.

The catalysed reaction is D-serine = pyruvate + NH4(+). This Acinetobacter baumannii (strain AB0057) protein is Probable D-serine dehydratase.